The chain runs to 357 residues: Serine/threonine-protein kinase nekl-2 (357 aa).

A Protein kinase domain is found at 4–267; the sequence is YEKVRVVGRG…VSQLLSDPLV (264 aa). ATP is bound by residues 10–18 and Lys35; that span reads VGRGAFGVC. The active-site Proton acceptor is the Asp137. Residues 281–290 are compositionally biased toward basic and acidic residues; sequence IEPPPTDKRK. The segment at 281–357 is disordered; sequence IEPPPTDKRK…QSRSQVHSKY (77 aa). 2 stretches are compositionally biased toward polar residues: residues 293-327 and 336-357; these read ASLSSRLRTYPTQSTLRPYSLSSNAPTTHLTQLTP and FFSSGRTSNQRTQSRSQVHSKY.

Belongs to the protein kinase superfamily. NEK Ser/Thr protein kinase family. NIMA subfamily. Mg(2+) is required as a cofactor. Expressed in hypodermal cells including in hyp7 syncytium but not in seam cells.

It localises to the cytoplasm. The catalysed reaction is L-seryl-[protein] + ATP = O-phospho-L-seryl-[protein] + ADP + H(+). The enzyme catalyses L-threonyl-[protein] + ATP = O-phospho-L-threonyl-[protein] + ADP + H(+). In terms of biological role, probable serine/threonine-protein kinase required for the completion of molting. May play a role in endocytosis in the hypodermis syncytium. This Caenorhabditis elegans protein is Serine/threonine-protein kinase nekl-2.